The following is a 1156-amino-acid chain: Condensin-2 complex subunit G2 (1156 aa).

The HEAT repeat unit spans residues 460-498 (MLPALKFCLHDNSEKVRVAFVDMLLKIKAVRAAKFWKIC). Positions 587–611 (PNEDTEDEDDDEGDGEGIVRGDSEK) are disordered. A compositionally biased stretch (acidic residues) spans 589 to 601 (EDTEDEDDDEGDG).

In terms of assembly, component of the condensin-2 complex, which contains the smc2 and smc4 heterodimer, and three non SMC subunits that probably regulate the complex: ncaph2, ncapd3 and ncapg2.

It is found in the nucleus. Regulatory subunit of the condensin-2 complex, a complex which establishes mitotic chromosome architecture and is involved in physical rigidity of the chromatid axis. The protein is Condensin-2 complex subunit G2 (ncapg2) of Xenopus laevis (African clawed frog).